Here is a 260-residue protein sequence, read N- to C-terminus: MIIVLSPAKSLDYETPAHVESYTKPAFVDDASELIDGLRKLSPQDIATLMDISDPLARLNFQRYADWSPTFTPANAKQAVLAFNGDVYEGFDAKSLSSTDLDYAQQHVRVLSGLYGLLRPLDLLQPYRLEMGTRFANARGKDLYAFWGDRITRALNEQLETRSGAARVLVNCASTEYFKSVKPKLLAAPVITPVFEDWKGGRYKIISFHAKRARGLMARFVVENRITDPNALKEFATEGYAFDAAASNDSTYVYRRRVGE.

The protein belongs to the UPF0246 family.

The polypeptide is UPF0246 protein Bcen2424_2223 (Burkholderia cenocepacia (strain HI2424)).